The sequence spans 527 residues: Endogenous retrovirus group FC1 member 1 Env polyprotein (527 aa).

The segment at 1-411 is surface protein; sequence MNSPCDRLQQ…EPRPQNKSKW (411 aa). The short motif at 280-283 is the CXXC element; the sequence is CFLC. The interval 412 to 432 is fusion peptide; it reads AIFLPLVLGISLASSLVASGL. The tract at residues 412–527 is transmembrane protein; the sequence is AIFLPLVLGI…LKKKKSSKRS (116 aa). The CKS-17 motif lies at 477 to 493; it reads AQNRQALDLLMAEKGRT. An intrachain disulfide couples cysteine 494 to cysteine 501. A CX6CC motif is present at residues 494–502; sequence CLFLQEECC.

This sequence belongs to the gamma type-C retroviral envelope protein family. HERV class-I F(c)2 env subfamily. In terms of processing, the CXXC motif is highly conserved across a broad range of retroviral envelope proteins. It is thought to participate in the formation of a labile disulfide bond possibly with the CX6CC motif present in the transmembrane domain. Low expression in skin and testis.

It is found in the virion. In terms of biological role, retroviral envelope proteins mediate receptor recognition and membrane fusion during early infection. Endogenous envelope proteins may have kept, lost or modified their original function during evolution. This endogenous envelope protein has lost its original fusogenic properties. This is Endogenous retrovirus group FC1 member 1 Env polyprotein (ERVFC1-1) from Homo sapiens (Human).